The primary structure comprises 129 residues: Small ribosomal subunit protein uS9 (129 aa).

This sequence belongs to the universal ribosomal protein uS9 family.

The chain is Small ribosomal subunit protein uS9 from Gemmatimonas aurantiaca (strain DSM 14586 / JCM 11422 / NBRC 100505 / T-27).